The chain runs to 478 residues: Proline--tRNA ligase (478 aa).

This sequence belongs to the class-II aminoacyl-tRNA synthetase family. ProS type 3 subfamily. Homodimer.

The protein resides in the cytoplasm. It catalyses the reaction tRNA(Pro) + L-proline + ATP = L-prolyl-tRNA(Pro) + AMP + diphosphate. In terms of biological role, catalyzes the attachment of proline to tRNA(Pro) in a two-step reaction: proline is first activated by ATP to form Pro-AMP and then transferred to the acceptor end of tRNA(Pro). This is Proline--tRNA ligase from Clostridium botulinum (strain Loch Maree / Type A3).